Here is a 174-residue protein sequence, read N- to C-terminus: Ribosome maturation factor RimM (174 aa).

The PRC barrel domain occupies Glu-96–Leu-169.

Belongs to the RimM family. Binds ribosomal protein uS19.

It is found in the cytoplasm. An accessory protein needed during the final step in the assembly of 30S ribosomal subunit, possibly for assembly of the head region. Essential for efficient processing of 16S rRNA. May be needed both before and after RbfA during the maturation of 16S rRNA. It has affinity for free ribosomal 30S subunits but not for 70S ribosomes. The polypeptide is Ribosome maturation factor RimM (Mycobacterium marinum (strain ATCC BAA-535 / M)).